We begin with the raw amino-acid sequence, 208 residues long: Probable GTP-binding protein EngB (208 aa).

Positions 29–203 (EGREVAFAGR…WDKLGEWLGI (175 aa)) constitute an EngB-type G domain. Residues 37–44 (GRSNAGKS), 64–68 (GRTQL), 82–85 (DLPG), 149–152 (TKAD), and 182–184 (FSA) each bind GTP. Ser-44 and Thr-66 together coordinate Mg(2+).

It belongs to the TRAFAC class TrmE-Era-EngA-EngB-Septin-like GTPase superfamily. EngB GTPase family. Mg(2+) serves as cofactor.

Functionally, necessary for normal cell division and for the maintenance of normal septation. This Alcanivorax borkumensis (strain ATCC 700651 / DSM 11573 / NCIMB 13689 / SK2) protein is Probable GTP-binding protein EngB.